The chain runs to 213 residues: Cytokinin riboside 5'-monophosphate phosphoribohydrolase LOG1 (213 aa).

Substrate contacts are provided by residues glutamate 78, 96–97, 113–119, and threonine 125; these read RK and GYGTLEE.

The protein belongs to the LOG family. As to expression, expressed in roots and shoots. Detected in the vascular tissues of roots, cotyledons, leaves and pistils, in the shoot apical meristem and in immature flowers.

The protein resides in the cytoplasm. It localises to the nucleus. It carries out the reaction N(6)-(dimethylallyl)adenosine 5'-phosphate + H2O = N(6)-dimethylallyladenine + D-ribose 5-phosphate. The enzyme catalyses 9-ribosyl-trans-zeatin 5'-phosphate + H2O = trans-zeatin + D-ribose 5-phosphate. In terms of biological role, cytokinin-activating enzyme working in the direct activation pathway. Phosphoribohydrolase that converts inactive cytokinin nucleotides to the biologically active free-base forms. This is Cytokinin riboside 5'-monophosphate phosphoribohydrolase LOG1 (LOG1) from Arabidopsis thaliana (Mouse-ear cress).